Here is a 417-residue protein sequence, read N- to C-terminus: Serine hydroxymethyltransferase (417 aa).

(6S)-5,6,7,8-tetrahydrofolate is bound by residues leucine 121 and 125–127 (GHL). Lysine 230 carries the N6-(pyridoxal phosphate)lysine modification. 355-357 (SPF) is a (6S)-5,6,7,8-tetrahydrofolate binding site.

It belongs to the SHMT family. Homodimer. Pyridoxal 5'-phosphate serves as cofactor.

The protein resides in the cytoplasm. It catalyses the reaction (6R)-5,10-methylene-5,6,7,8-tetrahydrofolate + glycine + H2O = (6S)-5,6,7,8-tetrahydrofolate + L-serine. The protein operates within one-carbon metabolism; tetrahydrofolate interconversion. It participates in amino-acid biosynthesis; glycine biosynthesis; glycine from L-serine: step 1/1. Its function is as follows. Catalyzes the reversible interconversion of serine and glycine with tetrahydrofolate (THF) serving as the one-carbon carrier. This reaction serves as the major source of one-carbon groups required for the biosynthesis of purines, thymidylate, methionine, and other important biomolecules. Also exhibits THF-independent aldolase activity toward beta-hydroxyamino acids, producing glycine and aldehydes, via a retro-aldol mechanism. The sequence is that of Serine hydroxymethyltransferase from Legionella pneumophila (strain Lens).